Consider the following 275-residue polypeptide: ADP-dependent (S)-NAD(P)H-hydrate dehydratase (275 aa).

Residues 5 to 273 form the YjeF C-terminal domain; that stretch reads TDEILAKVIK…EEIPLFMKKY (269 aa). (6S)-NADPHX-binding residues include alanine 40, glycine 103, and histidine 151. Glycine 214 serves as a coordination point for AMP. Aspartate 215 serves as a coordination point for (6S)-NADPHX.

This sequence belongs to the NnrD/CARKD family. Homotetramer. Mg(2+) is required as a cofactor.

It catalyses the reaction (6S)-NADHX + ADP = AMP + phosphate + NADH + H(+). The enzyme catalyses (6S)-NADPHX + ADP = AMP + phosphate + NADPH + H(+). Its function is as follows. Catalyzes the dehydration of the S-form of NAD(P)HX at the expense of ADP, which is converted to AMP. Together with NAD(P)HX epimerase, which catalyzes the epimerization of the S- and R-forms, the enzyme allows the repair of both epimers of NAD(P)HX, a damaged form of NAD(P)H that is a result of enzymatic or heat-dependent hydration. The chain is ADP-dependent (S)-NAD(P)H-hydrate dehydratase from Lactococcus lactis subsp. lactis (strain IL1403) (Streptococcus lactis).